The primary structure comprises 542 residues: 4-coumarate--CoA ligase-like 5 (542 aa).

Residues Ser-204, Ser-205, Gly-206, Thr-207, Thr-208, and Lys-212 each coordinate ATP. Phe-262 contacts (E)-4-coumaroyl-AMP. Arg-282 is a binding site for CoA. The SBD1 stretch occupies residues 284–353 (DFIAALRAIE…SVFPNVELVQ (70 aa)). (E)-4-coumaroyl-AMP contacts are provided by Gly-331, Gln-353, Gly-354, and Thr-358. Residues Gln-353, Gly-354, Thr-358, Asp-418, and Arg-433 each contribute to the ATP site. The SBD2 stretch occupies residues 354 to 397 (GYGLTESSGAVAATVGPEESKAYGSVGKLGSHLQAKIVDPSTGY). (E)-4-coumaroyl-AMP is bound by residues Lys-435 and Lys-439. The CoA site is built by Lys-441 and Gly-442. Lys-524 lines the ATP pocket.

This sequence belongs to the ATP-dependent AMP-binding enzyme family. Mg(2+) serves as cofactor.

The catalysed reaction is (E)-4-coumarate + ATP + CoA = (E)-4-coumaroyl-CoA + AMP + diphosphate. It carries out the reaction (E)-4-coumarate + ATP + H(+) = (E)-4-coumaroyl-AMP + diphosphate. The enzyme catalyses (E)-4-coumaroyl-AMP + CoA = (E)-4-coumaroyl-CoA + AMP + H(+). Its function is as follows. Carboxylate--CoA ligase that may use 4-coumarate as substrate. Follows a two-step reaction mechanism, wherein the carboxylate substrate first undergoes adenylation by ATP, followed by a thioesterification in the presence of CoA to yield the final CoA thioester. The sequence is that of 4-coumarate--CoA ligase-like 5 (4CLL5) from Oryza sativa subsp. japonica (Rice).